The sequence spans 118 residues: Large ribosomal subunit protein bL19 (118 aa).

Belongs to the bacterial ribosomal protein bL19 family.

In terms of biological role, this protein is located at the 30S-50S ribosomal subunit interface and may play a role in the structure and function of the aminoacyl-tRNA binding site. The chain is Large ribosomal subunit protein bL19 from Levilactobacillus brevis (strain ATCC 367 / BCRC 12310 / CIP 105137 / JCM 1170 / LMG 11437 / NCIMB 947 / NCTC 947) (Lactobacillus brevis).